The primary structure comprises 503 residues: Aminoaldehyde dehydrogenase 2, peroxisomal (503 aa).

Ile-28 and Asp-99 together coordinate Na(+). Trp-161 and Lys-185 together coordinate NAD(+). Na(+) is bound at residue Leu-189. Ser-239 provides a ligand contact to NAD(+). Glu-260 functions as the Proton acceptor in the catalytic mechanism. The active-site Nucleophile is the Cys-294. Positions 501–503 match the Microbody targeting signal motif; that stretch reads AKL.

The protein belongs to the aldehyde dehydrogenase family. As to quaternary structure, forms homodimers.

Its subcellular location is the peroxisome. The enzyme catalyses 3-aminopropanal + NAD(+) + H2O = beta-alanine + NADH + 2 H(+). It carries out the reaction 4-aminobutanal + NAD(+) + H2O = 4-aminobutanoate + NADH + 2 H(+). It catalyses the reaction 4-guanidinobutanal + NAD(+) + H2O = 4-guanidinobutanoate + NADH + 2 H(+). The protein operates within amine and polyamine biosynthesis; betaine biosynthesis via choline pathway; betaine from betaine aldehyde: step 1/1. Its function is as follows. Dehydrogenase that catalyzes the oxidation of several aminoaldehydes. Metabolizes and detoxifies aldehyde products of polyamine degradation to non-toxic amino acids. Catalyzes the oxidation of 3-aminopropanal to beta-alanine. Catalyzes the oxidation of 4-aminobutanal to 4-aminobutanoate. Catalyzes the oxidation of 4-guanidinobutanal to 4-guanidinobutanoate. This Pisum sativum (Garden pea) protein is Aminoaldehyde dehydrogenase 2, peroxisomal.